The sequence spans 424 residues: Glucose-1-phosphate adenylyltransferase (424 aa).

Alpha-D-glucose 1-phosphate contacts are provided by residues Y112, G177, 192–193 (EK), and S210.

This sequence belongs to the bacterial/plant glucose-1-phosphate adenylyltransferase family. In terms of assembly, homotetramer.

It carries out the reaction alpha-D-glucose 1-phosphate + ATP + H(+) = ADP-alpha-D-glucose + diphosphate. Its pathway is glycan biosynthesis; glycogen biosynthesis. Its function is as follows. Involved in the biosynthesis of ADP-glucose, a building block required for the elongation reactions to produce glycogen. Catalyzes the reaction between ATP and alpha-D-glucose 1-phosphate (G1P) to produce pyrophosphate and ADP-Glc. This is Glucose-1-phosphate adenylyltransferase from Methylococcus capsulatus (strain ATCC 33009 / NCIMB 11132 / Bath).